Here is a 184-residue protein sequence, read N- to C-terminus: NADH-quinone oxidoreductase subunit B (184 aa).

[4Fe-4S] cluster is bound by residues Cys-37, Cys-38, Cys-103, and Cys-132.

This sequence belongs to the complex I 20 kDa subunit family. NDH-1 is composed of 14 different subunits. Subunits NuoB, C, D, E, F, and G constitute the peripheral sector of the complex. The cofactor is [4Fe-4S] cluster.

It is found in the cell membrane. The catalysed reaction is a quinone + NADH + 5 H(+)(in) = a quinol + NAD(+) + 4 H(+)(out). NDH-1 shuttles electrons from NADH, via FMN and iron-sulfur (Fe-S) centers, to quinones in the respiratory chain. The immediate electron acceptor for the enzyme in this species is believed to be a menaquinone. Couples the redox reaction to proton translocation (for every two electrons transferred, four hydrogen ions are translocated across the cytoplasmic membrane), and thus conserves the redox energy in a proton gradient. In Nocardia farcinica (strain IFM 10152), this protein is NADH-quinone oxidoreductase subunit B.